The sequence spans 246 residues: Nuclear transcription factor Y subunit C-2 (246 aa).

Disordered regions lie at residues 1-35 and 205-246; these read MDNQ…AVPH and QQGA…PSSE. The span at 9–21 shows a compositional bias: low complexity; sequence AGQPAAAGAGAPV.

The protein belongs to the NFYC/HAP5 subunit family. In terms of assembly, heterotrimeric transcription factor composed of three components, NF-YA, NF-YB and NF-YC. NF-YB and NF-YC must interact and dimerize for NF-YA association and DNA binding. Interacts with NFYB8, NFYB10 and HD5/NFYB11.

The protein resides in the nucleus. It is found in the cytoplasm. Probable transcription factor involved in the regulation of flowering time under long day (LD) conditions. Functions as a repressor of flowering, independently of HD1 and GHD7. Controls flowering time by negatively regulating the expression of EHD1 and HD3A. Component of the NF-Y/HAP transcription factor complex. The polypeptide is Nuclear transcription factor Y subunit C-2 (Oryza sativa subsp. japonica (Rice)).